The chain runs to 487 residues: Malonate-semialdehyde dehydrogenase (487 aa).

NAD(+) is bound by residues Ala150, Phe152, Lys176, Glu179, Arg180, Ser229, and Thr251. Cys284 (nucleophile) is an active-site residue. Residue Glu382 coordinates NAD(+).

Belongs to the aldehyde dehydrogenase family. IolA subfamily. As to quaternary structure, homotetramer.

It catalyses the reaction 3-oxopropanoate + NAD(+) + CoA + H2O = hydrogencarbonate + acetyl-CoA + NADH + H(+). The enzyme catalyses 2-methyl-3-oxopropanoate + NAD(+) + CoA + H2O = propanoyl-CoA + hydrogencarbonate + NADH + H(+). The protein operates within polyol metabolism; myo-inositol degradation into acetyl-CoA; acetyl-CoA from myo-inositol: step 7/7. Its function is as follows. Catalyzes the oxidation of malonate semialdehyde (MSA) and methylmalonate semialdehyde (MMSA) into acetyl-CoA and propanoyl-CoA, respectively. Is involved in a myo-inositol catabolic pathway. Bicarbonate, and not CO2, is the end-product of the enzymatic reaction. The chain is Malonate-semialdehyde dehydrogenase from Bacillus velezensis (strain DSM 23117 / BGSC 10A6 / LMG 26770 / FZB42) (Bacillus amyloliquefaciens subsp. plantarum).